The chain runs to 347 residues: UDP-N-acetylenolpyruvoylglucosamine reductase (347 aa).

One can recognise an FAD-binding PCMH-type domain in the interval 24-195; it reads FDARARVAAR…VAVTFRLPKA (172 aa). Arginine 171 is a catalytic residue. The active-site Proton donor is the serine 247. Glutamate 343 is an active-site residue.

Belongs to the MurB family. FAD is required as a cofactor.

It localises to the cytoplasm. It catalyses the reaction UDP-N-acetyl-alpha-D-muramate + NADP(+) = UDP-N-acetyl-3-O-(1-carboxyvinyl)-alpha-D-glucosamine + NADPH + H(+). It functions in the pathway cell wall biogenesis; peptidoglycan biosynthesis. In terms of biological role, cell wall formation. This Burkholderia pseudomallei (strain 668) protein is UDP-N-acetylenolpyruvoylglucosamine reductase.